Consider the following 511-residue polypeptide: GMP synthase [glutamine-hydrolyzing] (511 aa).

A Glutamine amidotransferase type-1 domain is found at 5–195 (AILVLDFGSQ…VFKICQAQIN (191 aa)). Residue Cys-82 is the Nucleophile of the active site. Active-site residues include His-169 and Glu-171. The GMPS ATP-PPase domain occupies 196–386 (WSLEGNLETI…LGIKKESLYR (191 aa)). 223 to 229 (SGGTDSL) contacts ATP.

As to quaternary structure, homodimer.

The catalysed reaction is XMP + L-glutamine + ATP + H2O = GMP + L-glutamate + AMP + diphosphate + 2 H(+). The protein operates within purine metabolism; GMP biosynthesis; GMP from XMP (L-Gln route): step 1/1. Catalyzes the synthesis of GMP from XMP. This Borreliella burgdorferi (strain N40) (Borrelia burgdorferi) protein is GMP synthase [glutamine-hydrolyzing] (guaA).